Here is a 743-residue protein sequence, read N- to C-terminus: Putative metallophosphoesterase At3g03305 (743 aa).

The signal sequence occupies residues 1-40 (MESIGDDDELRSKTVSLPRRISFTILLLLLLISLSTRVSG). Residues Asp-66, His-68, and Asp-101 each coordinate a divalent metal cation. 5 helical membrane-spanning segments follow: residues 514–534 (ILWP…CIII), 565–585 (MPVV…FPWF), 623–643 (VMVV…LVVC), 687–704 (LFRK…WKHF), and 716–736 (MNVV…LYVI).

The protein belongs to the metallophosphoesterase superfamily. Requires a divalent metal cation as cofactor.

Its subcellular location is the membrane. This is Putative metallophosphoesterase At3g03305 from Arabidopsis thaliana (Mouse-ear cress).